A 223-amino-acid polypeptide reads, in one-letter code: Small ribosomal subunit protein uS5 (223 aa).

The segment covering Met-1–Ala-15 has biased composition (low complexity). Positions Met-1–Lys-51 are disordered. Residues Thr-16 to Lys-51 show a composition bias toward basic and acidic residues. The 64-residue stretch at Phe-54–Val-117 folds into the S5 DRBM domain.

Belongs to the universal ribosomal protein uS5 family. As to quaternary structure, part of the 30S ribosomal subunit. Contacts proteins S4 and S8.

With S4 and S12 plays an important role in translational accuracy. Functionally, located at the back of the 30S subunit body where it stabilizes the conformation of the head with respect to the body. This chain is Small ribosomal subunit protein uS5, found in Paenarthrobacter aurescens (strain TC1).